The following is a 103-amino-acid chain: Thioredoxin-1 (103 aa).

In terms of domain architecture, Thioredoxin spans 2-103 (VKQVSDSSEF…KLEASIKANL (102 aa)). Catalysis depends on nucleophile residues cysteine 30 and cysteine 33. Cysteine 30 and cysteine 33 are disulfide-bonded.

It belongs to the thioredoxin family.

In terms of biological role, participates in various redox reactions through the reversible oxidation of its active center dithiol to a disulfide and catalyzes dithiol-disulfide exchange reactions. This Schizosaccharomyces pombe (strain 972 / ATCC 24843) (Fission yeast) protein is Thioredoxin-1 (trx1).